Here is a 160-residue protein sequence, read N- to C-terminus: Transcription elongation factor GreA (160 aa).

A coiled-coil region spans residues 2–30 (SEKTYPMTLAEKEQLEQELEELKLVRRPE).

Belongs to the GreA/GreB family.

Necessary for efficient RNA polymerase transcription elongation past template-encoded arresting sites. The arresting sites in DNA have the property of trapping a certain fraction of elongating RNA polymerases that pass through, resulting in locked ternary complexes. Cleavage of the nascent transcript by cleavage factors such as GreA or GreB allows the resumption of elongation from the new 3'terminus. GreA releases sequences of 2 to 3 nucleotides. This is Transcription elongation factor GreA from Streptococcus mutans serotype c (strain ATCC 700610 / UA159).